We begin with the raw amino-acid sequence, 134 residues long: Cytochrome b (134 aa).

Transmembrane regions (helical) follow at residues phenylalanine 33–methionine 53, tryptophan 77–valine 98, and tryptophan 113–leucine 133. 2 residues coordinate heme b: histidine 83 and histidine 97.

It belongs to the cytochrome b family. The cytochrome bc1 complex contains 11 subunits: 3 respiratory subunits (MT-CYB, CYC1 and UQCRFS1), 2 core proteins (UQCRC1 and UQCRC2) and 6 low-molecular weight proteins (UQCRH/QCR6, UQCRB/QCR7, UQCRQ/QCR8, UQCR10/QCR9, UQCR11/QCR10 and a cleavage product of UQCRFS1). This cytochrome bc1 complex then forms a dimer. Requires heme b as cofactor.

It is found in the mitochondrion inner membrane. Functionally, component of the ubiquinol-cytochrome c reductase complex (complex III or cytochrome b-c1 complex) that is part of the mitochondrial respiratory chain. The b-c1 complex mediates electron transfer from ubiquinol to cytochrome c. Contributes to the generation of a proton gradient across the mitochondrial membrane that is then used for ATP synthesis. The sequence is that of Cytochrome b (MT-CYB) from Sorex shinto sadonis (Sado shrew).